The following is a 1181-amino-acid chain: HEAT repeat-containing protein 6 (1181 aa).

An HEAT 1 repeat occupies proline 159–glycine 198. Disordered stretches follow at residues glutamine 292–glycine 347 and leucine 371–serine 390. Over residues lysine 300 to threonine 312 the composition is skewed to polar residues. Basic residues predominate over residues leucine 313–lysine 325. Phosphoserine occurs at positions 336 and 337. Residues serine 399 and serine 402 each carry the phosphoserine modification. 3 HEAT repeats span residues glutamate 452–glutamine 490, serine 515–tyrosine 552, and serine 558–proline 595. Residues asparagine 613–glycine 646 are disordered. A Phosphothreonine modification is found at threonine 618. A compositionally biased stretch (polar residues) spans glutamate 637–glycine 646. Residue serine 643 is modified to Phosphoserine.

Amplified in breast cancer cell lines MCF-7 and BT-474.

Amplification-dependent oncogene. This chain is HEAT repeat-containing protein 6 (HEATR6), found in Homo sapiens (Human).